We begin with the raw amino-acid sequence, 243 residues long: Triosephosphate isomerase (243 aa).

9–11 contributes to the substrate binding site; the sequence is NWK. His96 functions as the Electrophile in the catalytic mechanism. Glu165 (proton acceptor) is an active-site residue. Residues Gly171, Ser204, and 225 to 226 contribute to the substrate site; that span reads GG.

It belongs to the triosephosphate isomerase family. Homodimer.

The protein resides in the cytoplasm. The catalysed reaction is D-glyceraldehyde 3-phosphate = dihydroxyacetone phosphate. It participates in carbohydrate biosynthesis; gluconeogenesis. The protein operates within carbohydrate degradation; glycolysis; D-glyceraldehyde 3-phosphate from glycerone phosphate: step 1/1. Involved in the gluconeogenesis. Catalyzes stereospecifically the conversion of dihydroxyacetone phosphate (DHAP) to D-glyceraldehyde-3-phosphate (G3P). The polypeptide is Triosephosphate isomerase (Prochlorococcus marinus (strain SARG / CCMP1375 / SS120)).